A 487-amino-acid polypeptide reads, in one-letter code: Glutamyl-tRNA(Gln) amidotransferase subunit A (487 aa).

Catalysis depends on charge relay system residues K76 and S151. S175 acts as the Acyl-ester intermediate in catalysis.

The protein belongs to the amidase family. GatA subfamily. Heterotrimer of A, B and C subunits.

It catalyses the reaction L-glutamyl-tRNA(Gln) + L-glutamine + ATP + H2O = L-glutaminyl-tRNA(Gln) + L-glutamate + ADP + phosphate + H(+). Functionally, allows the formation of correctly charged Gln-tRNA(Gln) through the transamidation of misacylated Glu-tRNA(Gln) in organisms which lack glutaminyl-tRNA synthetase. The reaction takes place in the presence of glutamine and ATP through an activated gamma-phospho-Glu-tRNA(Gln). The protein is Glutamyl-tRNA(Gln) amidotransferase subunit A of Azoarcus sp. (strain BH72).